Consider the following 188-residue polypeptide: Putative lipoprotein LprB (188 aa).

The N-terminal stretch at 1 to 27 (MRCDVRALALAARGLIELMIVIPMVAG) is a signal peptide. Cys-28 carries N-palmitoyl cysteine lipidation. Residue Cys-28 is the site of S-diacylglycerol cysteine attachment.

The protein resides in the cell membrane. The sequence is that of Putative lipoprotein LprB (lprB) from Mycobacterium leprae (strain TN).